We begin with the raw amino-acid sequence, 266 residues long: Killer cell lectin-like receptor 5 (266 aa).

The Cytoplasmic portion of the chain corresponds to 1-44 (MSEPEVTYSTVRLHKSSGLQRLVSHEEIQGPGEAGYRKCSVPWQ). Residues 45-66 (LTVRSLGIFCFLLLVTVAVLAV) traverse the membrane as a helical; Signal-anchor for type II membrane protein segment. At 67 to 266 (KIFQYSQHKQ…CGKKLDHFPG (200 aa)) the chain is on the extracellular side. Residues Asn87 and Asn104 are each glycosylated (N-linked (GlcNAc...) asparagine). A C-type lectin domain is found at 143-261 (GVKHWFCYGT…SYFCICGKKL (119 aa)). 4 disulfide bridges follow: Cys149–Cys154, Cys167–Cys255, Cys171–Cys257, and Cys236–Cys249. N-linked (GlcNAc...) asparagine glycosylation is present at Asn250.

In terms of assembly, homodimer; disulfide-linked. As to expression, mostly expressed in NK cells, but also observed on NK T and memory T-cells.

The protein localises to the membrane. Its function is as follows. Receptor on natural killer (NK) cells for class I MHC. The protein is Killer cell lectin-like receptor 5 (Klra5) of Mus musculus (Mouse).